A 230-amino-acid polypeptide reads, in one-letter code: Ribose-5-phosphate isomerase A (230 aa).

Substrate contacts are provided by residues 31-34 (TGST), 87-90 (DGAD), and 100-103 (KGGG). Residue E109 is the Proton acceptor of the active site. K127 serves as a coordination point for substrate.

It belongs to the ribose 5-phosphate isomerase family. As to quaternary structure, homodimer.

The enzyme catalyses aldehydo-D-ribose 5-phosphate = D-ribulose 5-phosphate. It participates in carbohydrate degradation; pentose phosphate pathway; D-ribose 5-phosphate from D-ribulose 5-phosphate (non-oxidative stage): step 1/1. Functionally, catalyzes the reversible conversion of ribose-5-phosphate to ribulose 5-phosphate. This chain is Ribose-5-phosphate isomerase A, found in Lactobacillus delbrueckii subsp. bulgaricus (strain ATCC 11842 / DSM 20081 / BCRC 10696 / JCM 1002 / NBRC 13953 / NCIMB 11778 / NCTC 12712 / WDCM 00102 / Lb 14).